Consider the following 315-residue polypeptide: Tetratricopeptide repeat protein 23-like (315 aa).

The interval 28-56 (KIPEHQRTDESSPTSGSEESEEDTKAKEK) is disordered. Coiled-coil stretches lie at residues 65 to 90 (REKL…ANKE), 179 to 200 (REAY…ESYK), and 250 to 280 (SELV…HQAH).

The protein resides in the cytoplasm. The protein localises to the cytoskeleton. It is found in the microtubule organizing center. Its subcellular location is the centrosome. It localises to the spindle. The protein resides in the midbody. This is Tetratricopeptide repeat protein 23-like (TTC23L) from Bos taurus (Bovine).